A 509-amino-acid polypeptide reads, in one-letter code: MTLQGKPYRLSDLIKQTGVRLTDCSNQFSDRFVSGITQIAQSVERDDIFVAFQGKTRHGVEFLDQVQSCAAVLTDNKGRHIMQSDCLPTRSTPILVTDSPRSDLIVLAKRVYPIDDIRIFGITGTNGKTSTMHIAAKLLEMMGISCGISTTIGSSASESDSCLTTPELCQLYARIFTAKQARADFFALEASSHAINRGRLGDIVLEVAAFTNLTPEHMEEHKNMEAYYQAKKALFLNKRSNSAVINIDTPYGIRLFKETGCSASVISENTKYGLDHKLFWQASVRRVGLSFGFTLISPSGYRVESSISLLGKAFALNTCMAIVILCNLGIDIERIDSVLRKAGGLKMVLPGRMEVFQTGNSPRVIVDHGHTVDAVETALVAAKSITRGRLITIINADGQRDPSKRKHLGQLCGAYSDKLFITDGHSRFENPAEIRRMILDGVEGPRKQVEQIPSMTQAVLAAIDIAKSDDTVLCSGFGDDPYLDVLGKKIPYSLRDEVRRGLERFAQGT.

124 to 130 (GTNGKTS) is a binding site for ATP. UDP-N-acetyl-alpha-D-muramoyl-L-alanyl-D-glutamate-binding positions include 164–165 (TT), S191, and R199. An N6-carboxylysine modification is found at K231.

Belongs to the MurCDEF family. MurE subfamily. Carboxylation is probably crucial for Mg(2+) binding and, consequently, for the gamma-phosphate positioning of ATP.

It localises to the cytoplasm. Its pathway is cell wall biogenesis; peptidoglycan biosynthesis. Its function is as follows. Catalyzes the addition of an amino acid to the nucleotide precursor UDP-N-acetylmuramoyl-L-alanyl-D-glutamate (UMAG) in the biosynthesis of bacterial cell-wall peptidoglycan. This chain is UDP-N-acetylmuramyl-tripeptide synthetase, found in Tropheryma whipplei (strain TW08/27) (Whipple's bacillus).